The sequence spans 325 residues: Putative S-adenosyl-L-methionine-dependent methyltransferase MT0917 (325 aa).

S-adenosyl-L-methionine is bound by residues D126 and 155–156 (DL).

This sequence belongs to the UPF0677 family.

Functionally, exhibits S-adenosyl-L-methionine-dependent methyltransferase activity. In Mycobacterium tuberculosis (strain CDC 1551 / Oshkosh), this protein is Putative S-adenosyl-L-methionine-dependent methyltransferase MT0917.